A 446-amino-acid chain; its full sequence is Exodeoxyribonuclease 7 large subunit (446 aa).

It belongs to the XseA family. In terms of assembly, heterooligomer composed of large and small subunits.

It localises to the cytoplasm. The enzyme catalyses Exonucleolytic cleavage in either 5'- to 3'- or 3'- to 5'-direction to yield nucleoside 5'-phosphates.. Functionally, bidirectionally degrades single-stranded DNA into large acid-insoluble oligonucleotides, which are then degraded further into small acid-soluble oligonucleotides. The protein is Exodeoxyribonuclease 7 large subunit of Vibrio cholerae serotype O1 (strain ATCC 39541 / Classical Ogawa 395 / O395).